Here is a 1136-residue protein sequence, read N- to C-terminus: Solute carrier family 12 member 2 (1136 aa).

Disordered stretches follow at residues 1–73 (MSAS…SVSG) and 91–121 (PDAAPAETAQNGDTVMSEGSLHSSTGGQQHH). The Cytoplasmic segment spans residues 1 to 208 (MSASPPISAG…SESKGVVKFG (208 aa)). A phosphothreonine mark is found at T125, T129, T134, T139, and T152. The chain crosses the membrane as a discontinuously helical span at residues 209–234 (WIKGVLVRCMLNIWGVMLFIRMTWIV). L219 serves as a coordination point for Na(+). The K(+) site is built by N220 and I221. Residue W222 coordinates Na(+). Chloride is bound by residues G223, V224, and M225. Residues 235-238 (GQAG) lie on the Extracellular side of the membrane. A helical membrane pass occupies residues 239–261 (IAYSCIIVIMATVVTTITGCSTS). Topologically, residues 262-285 (AIATNGFVRGGGAYYLISRSLGPE) are cytoplasmic. A helical membrane pass occupies residues 286-314 (FGGSIGLIFAFANAVAVAMYVVGFAETVV). Chloride is bound at residue F294. Residue Y305 participates in K(+) binding. The Extracellular segment spans residues 315–327 (ELLMDSGLLMIDQ). A run of 2 helical transmembrane segments spans residues 328 to 351 (TNDIRVIGTITVILLLGISVAGME) and 352 to 376 (WEAKAQIFLLVILITAIFNYFIGSF). Residues 377 to 407 (IAVDSKKKFGFFSYDAGILAENFGPDFRGQT) are Extracellular-facing. The discontinuously helical transmembrane segment at 408–427 (FFSVFSIFFPAATGILAGAN) threads the bilayer. The K(+) site is built by P417, A418, and T420. P417 and A418 together coordinate chloride. The chloride site is built by G421 and I422. Over 428–438 (ISGDLADPQMA) the chain is Cytoplasmic. A helical transmembrane segment spans residues 439-462 (IPKGTLLAILITGLVYVGVAISAG). The Extracellular portion of the chain corresponds to 463-523 (ACIVRDATGI…DFQVMSVVSG (61 aa)). N-linked (GlcNAc...) asparagine glycosylation is found at N475 and N481. Cysteines 496 and 507 form a disulfide. The helical transmembrane segment at 524–551 (FSPLISAGIFSATLSSALASLVSAPKVF) threads the bilayer. Residues A535, S538, and S539 each contribute to the Na(+) site. The Cytoplasmic segment spans residues 552 to 576 (QALCKDNIYPGIAIFGKGYGKNNEP). Helical transmembrane passes span 577-595 (LRGYFLTFGIALAFILIAE) and 596-619 (LNVIAPIISNFFLASYALINFSVF). Positions 607 and 611 each coordinate chloride. Over 620–636 (HASLANSPGWRPSFKYY) the chain is Cytoplasmic. 2 helical membrane-spanning segments follow: residues 637 to 656 (NMWASLAGAILCCVVMFIIN) and 657 to 672 (WWAALLTNVIVLSLYI). Topologically, residues 673 to 1136 (YVSYKKPDVN…NHQSVLTFYS (464 aa)) are cytoplasmic. Positions 689–702 (ALTYHQALTHSLQL) are scissor helix. The disordered stretch occupies residues 875-921 (SKDSDGDSSKPSSKATSVQNSPAVQKDEDDDGKAHTQPLLKKDKKSP). T1059 carries the post-translational modification Phosphothreonine.

Belongs to the SLC12A transporter family. As to quaternary structure, homodimer; adopts a domain-swap conformation at the scissor helices connecting the transmembrane domain and C-terminal domain. Phosphorylated at Thr-125, Thr-129 and Thr-134 by OXSR1/OSR1 and STK39/SPAK downstream of WNK kinases (WNK1, WNK2, WNK3 or WNK4), promoting its activity.

It is found in the basolateral cell membrane. The catalysed reaction is K(+)(out) + 2 chloride(out) + Na(+)(out) = K(+)(in) + 2 chloride(in) + Na(+)(in). Its activity is regulated as follows. Activated following phosphorylation by OXSR1/OSR1 and STK39/SPAK. Inhibited by bumetanide. Functionally, cation-chloride cotransporter which mediates the electroneutral transport of chloride, potassium and/or sodium ions across the membrane. Plays a vital role in the regulation of ionic balance and cell volume. Important for maintenance of endolymph volume in the otic vesicle, probably by regulating ion homeostasis. Also plays a role in normal development of the swim bladder. The sequence is that of Solute carrier family 12 member 2 from Danio rerio (Zebrafish).